The following is a 206-amino-acid chain: Sperm acrosome developmental regulator (206 aa).

Residues 180–206 (RRHHVRCHAAPRPNPAQSLKLDAQSPL) form a disordered region.

As to expression, expressed in sperm (at protein level).

It is found in the cytoplasmic vesicle. It localises to the secretory vesicle. Its subcellular location is the acrosome. May play a role in acrosome formation and nucleus shaping during spermiogenesis. The sequence is that of Sperm acrosome developmental regulator from Homo sapiens (Human).